The following is a 369-amino-acid chain: Aminomethyltransferase (369 aa).

This sequence belongs to the GcvT family. The glycine cleavage system is composed of four proteins: P, T, L and H.

It carries out the reaction N(6)-[(R)-S(8)-aminomethyldihydrolipoyl]-L-lysyl-[protein] + (6S)-5,6,7,8-tetrahydrofolate = N(6)-[(R)-dihydrolipoyl]-L-lysyl-[protein] + (6R)-5,10-methylene-5,6,7,8-tetrahydrofolate + NH4(+). Functionally, the glycine cleavage system catalyzes the degradation of glycine. The polypeptide is Aminomethyltransferase (Xanthomonas euvesicatoria pv. vesicatoria (strain 85-10) (Xanthomonas campestris pv. vesicatoria)).